A 229-amino-acid chain; its full sequence is UPF0758 protein MM_2791 (229 aa).

Residues 106–228 enclose the MPN domain; it reads KISSPKDVYT…YVSLKDEGFV (123 aa). Residues His-177, His-179, and Asp-190 each contribute to the Zn(2+) site. The JAMM motif signature appears at 177-190; the sequence is HNHPSGDPSPSRED.

Belongs to the UPF0758 family.

This chain is UPF0758 protein MM_2791, found in Methanosarcina mazei (strain ATCC BAA-159 / DSM 3647 / Goe1 / Go1 / JCM 11833 / OCM 88) (Methanosarcina frisia).